A 526-amino-acid chain; its full sequence is Probable rhamnogalacturonase B (526 aa).

An N-terminal signal peptide occupies residues 1–20; the sequence is MHVNTLSVLSLVGLVPLAAA. Cys-41 and Cys-67 are oxidised to a cystine. Asn-144 is a glycosylation site (N-linked (GlcNAc...) asparagine). Catalysis depends on Asp-218, which acts as the Proton donor. The cysteines at positions 220 and 237 are disulfide-linked. Residues Asn-238 and Asn-253 are each glycosylated (N-linked (GlcNAc...) asparagine). The active site involves His-293. N-linked (GlcNAc...) asparagine glycosylation occurs at Asn-320. 2 cysteine pairs are disulfide-bonded: Cys-343-Cys-349 and Cys-371-Cys-380.

This sequence belongs to the glycosyl hydrolase 28 family.

The protein localises to the secreted. It catalyses the reaction Endohydrolysis of alpha-D-GalA-(1-&gt;2)-alpha-L-Rha glycosidic bond in the rhamnogalacturonan I backbone with initial inversion of anomeric configuration releasing oligosaccharides with beta-D-GalA at the reducing end.. In terms of biological role, pectinolytic enzymes consist of four classes of enzymes: pectine lyase, polygalacturonase, pectin methylesterase and rhamnogalacturonase. Hydrolyzes alpha-D-galacturonopyranosyl-(1,2)-alpha-L-rhamnopyranosyl linkages in the backbone of the hairy regions of pectins. The protein is Probable rhamnogalacturonase B (rhgB) of Aspergillus terreus (strain NIH 2624 / FGSC A1156).